The following is a 92-amino-acid chain: Large ribosomal subunit protein eL43y (92 aa).

Residues 39-60 (CEFCGKYGVKRKAVGIWGCKDC) form a C4-type zinc finger.

The protein belongs to the eukaryotic ribosomal protein eL43 family.

This Arabidopsis thaliana (Mouse-ear cress) protein is Large ribosomal subunit protein eL43y (RPL37AC).